The chain runs to 310 residues: Lipoyl synthase (310 aa).

Residues cysteine 41, cysteine 46, cysteine 52, cysteine 68, cysteine 72, cysteine 75, and serine 281 each coordinate [4Fe-4S] cluster. Residues 54 to 270 (GERRTATFMI…RKVAMEKGFK (217 aa)) form the Radical SAM core domain. Residues 285–310 (DEQVNEAAKERQRIGDEKLEAAKNEA) are disordered.

Belongs to the radical SAM superfamily. Lipoyl synthase family. The cofactor is [4Fe-4S] cluster.

It localises to the cytoplasm. It catalyses the reaction [[Fe-S] cluster scaffold protein carrying a second [4Fe-4S](2+) cluster] + N(6)-octanoyl-L-lysyl-[protein] + 2 oxidized [2Fe-2S]-[ferredoxin] + 2 S-adenosyl-L-methionine + 4 H(+) = [[Fe-S] cluster scaffold protein] + N(6)-[(R)-dihydrolipoyl]-L-lysyl-[protein] + 4 Fe(3+) + 2 hydrogen sulfide + 2 5'-deoxyadenosine + 2 L-methionine + 2 reduced [2Fe-2S]-[ferredoxin]. It participates in protein modification; protein lipoylation via endogenous pathway; protein N(6)-(lipoyl)lysine from octanoyl-[acyl-carrier-protein]. In terms of biological role, catalyzes the radical-mediated insertion of two sulfur atoms into the C-6 and C-8 positions of the octanoyl moiety bound to the lipoyl domains of lipoate-dependent enzymes, thereby converting the octanoylated domains into lipoylated derivatives. In Staphylococcus carnosus (strain TM300), this protein is Lipoyl synthase.